We begin with the raw amino-acid sequence, 1158 residues long: Transient receptor potential cation channel subfamily M member 5 (1158 aa).

The Cytoplasmic segment spans residues 1–729 (MQTTQSSCPG…LTRWRKFWGA (729 aa)). S129 is subject to Phosphoserine; by PKC. Ca(2+) contacts are provided by C341, D350, D353, and E354. A disordered region spans residues 488 to 507 (GRRMEERGPPKRPAGQKWLP). Positions 552-572 (KIIKEMSHLEKEAEVARTMRE) form a coiled coil. The helical transmembrane segment at 730-754 (PVTVFLGNVVMYFAFLFLFTYVLLV) threads the bilayer. Residues 755-764 (DFRPPPQGPS) lie on the Extracellular side of the membrane. Residues 765-784 (GSEVTLYFWVFTLVLEEIRQ) traverse the membrane as a helical segment. Residues E781 and Q784 each contribute to the Ca(2+) site. Residues 785–805 (GFFTDEDTHLVKKFTLYVEDN) lie on the Cytoplasmic side of the membrane. The helical transmembrane segment at 806–824 (WNKCDMVAIFLFIVGVTCR) threads the bilayer. N807 and D810 together coordinate Ca(2+). The Extracellular portion of the chain corresponds to 825-831 (MVPSVFE). The chain crosses the membrane as a helical span at residues 832 to 854 (AGRTVLAIDFMVFTLRLIHIFAI). Over 855-863 (HKQLGPKII) the chain is Cytoplasmic. The chain crosses the membrane as a helical span at residues 864–893 (IVERMMKDVFFFLFFLSVWLVAYGVTTQAL). Residues 894 to 902 (LHPHDGRLE) lie on the Extracellular side of the membrane. The pore-forming intramembrane region spans 903-938 (WIFRRVLYRPYLQIFGQIPLDEIDEARVNCSLHPLL). Residues 917 to 919 (FGQ) carry the Selectivity filter motif. Topologically, residues 939–950 (LESSASCPNLYA) are extracellular. The chain crosses the membrane as a helical span at residues 951-985 (NWLVILLLVTFLLVTNVLLMNLLIAMFSYTFQVVQ). Over 986–1158 (GNADMFWKFQ…LESGLPPSDT (173 aa)) the chain is Cytoplasmic. A Ca(2+)-binding site is contributed by E1002. Residues 1127–1141 (TYSSSQNCGCRSQPA) are compositionally biased toward polar residues. The tract at residues 1127–1158 (TYSSSQNCGCRSQPASARDREYLESGLPPSDT) is disordered.

The protein belongs to the transient receptor (TC 1.A.4) family. LTrpC subfamily. TRPM5 sub-subfamily. Homotetramer. Multiple phosphorylation sites regulate the Gq/ TRPM5 modulation axis, with the Ser-129 playing a substantial role in this positive modulation. As to expression, strongly expressed in liver, heart, testis, brain and kidney. Detected in fetal liver, kidney, spleen, brain, heart and lung, and in adult skin, eyes, spleen, stomach, small intestine, colon, lung, bladder, pancreas and thymus. Biallelically expressed at all stages and tissues examined. Also expressed in subsets of taste receptor cells of the tongue, in olfactory sensory neurons of the main olfactory epithelium and in the vomeronasal organ.

Its subcellular location is the cell membrane. It catalyses the reaction Na(+)(in) = Na(+)(out). The enzyme catalyses K(+)(in) = K(+)(out). Its activity is regulated as follows. Ca(2+)-activated cation channel. Displays voltage dependence modulation. Regulated by PI(4,5)P2 levels. PI(4,5)P 2 reverses the Ca(2+) -induced desensitization of channels. Inhibited by flufenamic acid with an IC(50) of 24.5 uM and spermine with an IC(50) of 37 uM. Is a highly temperature-sensitive, heat activated channel showing a steep increase of inward currents at temperatures between 15 and 35 degrees Celsius. Heat activation is due to a shift of the voltage-dependent activation curve to negative potentials. The channel is blocked by extracellular acidification. In terms of biological role, monovalent cation-selective ion channel activated by intracellular Ca(2+) in a voltage- and temperature-dependent manner. Mediates the transport of Na(+), K(+) and Cs(+) ions equally well. Activated directly by increase in intracellular Ca(2+), but is impermeable to it. The activation mechanism of TRPM5 involves a multistep process. TRPM5 activation involves ligand binding (i.e., tastant molecule, glucose stimulation) to Gq/G-protein coupled receptors (GPCR) and leads to the breakdown of phosphatidylinositol bisphosphate (PIP2) into diacylglycerol (DAG) and inositol trisphosphate (IP3), IP3 binds to its receptors in the endoplasmic reticulum and cause Ca(2+) release. Simultaneously with the intracellular Ca(2+) release, DAG activates the protein kinase C (PKC), which phosphorylates the TRPM5 channel. This phosphorylation combined with the bound Ca(2+), leads to a robust inward current allowing the entry of sodium ions (Na+) into the cell. This ion influx depolarizes the cell membrane, generating action potentials that propagate TRPM5 signals. Is a key player in sensing sweet, umami and bitter stimuli. May also be involved in sensing semiochemicals. Involved in insulin secretion by pancreatic beta cells. The chain is Transient receptor potential cation channel subfamily M member 5 from Mus musculus (Mouse).